Here is a 161-residue protein sequence, read N- to C-terminus: Cyclic pyranopterin monophosphate synthase (161 aa).

Residues 73–75 and 110–111 contribute to the substrate site; these read LCH and ME. D125 is an active-site residue.

Belongs to the MoaC family. Homohexamer; trimer of dimers.

The catalysed reaction is (8S)-3',8-cyclo-7,8-dihydroguanosine 5'-triphosphate = cyclic pyranopterin phosphate + diphosphate. It functions in the pathway cofactor biosynthesis; molybdopterin biosynthesis. Its function is as follows. Catalyzes the conversion of (8S)-3',8-cyclo-7,8-dihydroguanosine 5'-triphosphate to cyclic pyranopterin monophosphate (cPMP). The protein is Cyclic pyranopterin monophosphate synthase of Pseudomonas syringae pv. syringae (strain B728a).